We begin with the raw amino-acid sequence, 349 residues long: Hydrophobic dipeptide epimerase (349 aa).

Residues threonine 127 and 153-155 (KIK) each bind substrate. The Mg(2+) site is built by aspartate 186, glutamate 212, and aspartate 237. Residues lysine 259 and 309–311 (DLD) each bind substrate.

It belongs to the mandelate racemase/muconate lactonizing enzyme family. The cofactor is Mg(2+).

Catalyzes the epimerization a variety of hydrophobic dipeptides. Epimerase activity is highest with L-Ala-L-Tyr, and lower with L-Ala-L-Met, L-Ala-L-Phe, L-Tyr-L-Ala, L-Tyr-L-Met and L-Tyr-L-Trp (in vitro). This chain is Hydrophobic dipeptide epimerase, found in Flavobacteria bacterium (strain MS024-2A).